The chain runs to 168 residues: Putative ankyrin repeat protein RBE_1411 (168 aa).

ANK repeat units lie at residues 59–88 (TIFS…LQHK), 98–127 (YGDT…DLTI), and 131–160 (KGET…ILGN).

The protein is Putative ankyrin repeat protein RBE_1411 of Rickettsia bellii (strain RML369-C).